We begin with the raw amino-acid sequence, 213 residues long: Orotate phosphoribosyltransferase (213 aa).

K26 is a 5-phospho-alpha-D-ribose 1-diphosphate binding site. 34–35 is an orotate binding site; sequence FF. Residues 72–73, R99, K100, K103, H105, and 124–132 each bind 5-phospho-alpha-D-ribose 1-diphosphate; these read YK and DDVITAGTA. 2 residues coordinate orotate: T128 and R156.

The protein belongs to the purine/pyrimidine phosphoribosyltransferase family. PyrE subfamily. Homodimer. The cofactor is Mg(2+).

The catalysed reaction is orotidine 5'-phosphate + diphosphate = orotate + 5-phospho-alpha-D-ribose 1-diphosphate. The protein operates within pyrimidine metabolism; UMP biosynthesis via de novo pathway; UMP from orotate: step 1/2. Its function is as follows. Catalyzes the transfer of a ribosyl phosphate group from 5-phosphoribose 1-diphosphate to orotate, leading to the formation of orotidine monophosphate (OMP). In Escherichia coli O139:H28 (strain E24377A / ETEC), this protein is Orotate phosphoribosyltransferase.